The primary structure comprises 184 residues: Thymidine kinase (184 aa).

ATP contacts are provided by residues 10–17 and 83–86; these read GPMYSGKT and DEVQ. Glu-84 (proton acceptor) is an active-site residue. Cys-140, Cys-143, Cys-173, and Cys-176 together coordinate Zn(2+).

Belongs to the thymidine kinase family. Homotetramer.

The protein localises to the cytoplasm. The enzyme catalyses thymidine + ATP = dTMP + ADP + H(+). The protein is Thymidine kinase of Thermotoga petrophila (strain ATCC BAA-488 / DSM 13995 / JCM 10881 / RKU-1).